The following is a 548-amino-acid chain: Cilia- and flagella-associated protein 97 (548 aa).

Phosphoserine is present on residues Ser-8 and Ser-19. 3 disordered regions span residues 85 to 297 (NYLT…RQEN), 407 to 431 (LSRQ…PPKL), and 497 to 548 (YSPL…LRSH). Over residues 91 to 107 (GNERKPKFPSKEQHVEN) the composition is skewed to basic and acidic residues. The span at 112 to 121 (TRSPSLLTSS) shows a compositional bias: low complexity. Positions 152–161 (DYYTDGEESS) are enriched in acidic residues. Position 155 is a phosphothreonine (Thr-155). Phosphoserine occurs at positions 160 and 161. The span at 191–209 (KASSSSLSSSSSRSSSDCS) shows a compositional bias: low complexity. Residues 214–237 (DMQNKPDSGSSGKRVSSVTPSSPK) show a composition bias toward polar residues. Ser-235 bears the Phosphoserine mark. Residues 238 to 248 (QKCKSGRKSSA) show a composition bias toward basic residues. Ser-259 is modified (phosphoserine). Over residues 264-289 (TDVTPASTPDSSPAQPFELSQSQNQK) the composition is skewed to polar residues. The stretch at 383–460 (RKNYSFTREE…ALLKRLEAVK (78 aa)) forms a coiled coil. Composition is skewed to polar residues over residues 504-514 (SRTSSATSGLS) and 537-548 (IQCSNSKVLRSH).

This sequence belongs to the CFAP97 family.

The protein is Cilia- and flagella-associated protein 97 of Rattus norvegicus (Rat).